The chain runs to 174 residues: Shikimate kinase 2 (174 aa).

12-17 (GAGKTT) provides a ligand contact to ATP. Threonine 16 and aspartate 32 together coordinate Mg(2+). Residues aspartate 34, arginine 58, and glycine 79 each coordinate substrate. Residues 112–126 (EEYPQDTQRPTLTGR) form an LID domain region. ATP is bound at residue arginine 120. A substrate-binding site is contributed by arginine 139.

The protein belongs to the shikimate kinase family. AroL subfamily. As to quaternary structure, monomer. Mg(2+) is required as a cofactor.

The protein localises to the cytoplasm. It carries out the reaction shikimate + ATP = 3-phosphoshikimate + ADP + H(+). It functions in the pathway metabolic intermediate biosynthesis; chorismate biosynthesis; chorismate from D-erythrose 4-phosphate and phosphoenolpyruvate: step 5/7. Its function is as follows. Catalyzes the specific phosphorylation of the 3-hydroxyl group of shikimic acid using ATP as a cosubstrate. The chain is Shikimate kinase 2 from Serratia proteamaculans (strain 568).